Reading from the N-terminus, the 437-residue chain is O-methyltransferase 3 (437 aa).

The disordered stretch occupies residues 1-21 (MNNKTSNGDITNDEPTVGSKR). The stretch at 146 to 180 (SDNLYQDKDDLEKQEKEREKKMANLLSKNVDIKEL) forms a coiled coil. The interval 408–437 (DPINNNNNNNNNNNNNNNNTTTTTSTTTTN) is disordered. Positions 411 to 437 (NNNNNNNNNNNNNNNNTTTTTSTTTTN) are enriched in low complexity.

The protein belongs to the methyltransferase superfamily. METL family.

In terms of biological role, probable methyltransferase. In Dictyostelium discoideum (Social amoeba), this protein is O-methyltransferase 3 (omt3).